The following is a 214-amino-acid chain: Type IV major pilin protein PilE1 (214 aa).

A propeptide spans 1-7 (MNTLQKG) (leader sequence). Position 8 is an N-methylphenylalanine (F8). Residues 8–28 (FTLIELMIVIAIVGILAAVAL) form a helical membrane-spanning segment. C127 and C161 are joined by a disulfide. A disordered region spans residues 182-214 (AGTDAVTADTTGKDKEIDTKHLPSTCRDKSSAE). Positions 192–214 (TGKDKEIDTKHLPSTCRDKSSAE) are enriched in basic and acidic residues.

This sequence belongs to the N-Me-Phe pilin family. The pili are polar flexible filaments of about 5.4 nanometers diameter and 2.5 micrometers average length; they consist of only a single polypeptide chain arranged in a helical configuration of five subunits per turn in the assembled pilus.

The protein localises to the fimbrium. It is found in the membrane. Functionally, major component of the type IV pilus (T4P) that plays a role in cellular adherence, microcolony formation, resistance to neutrophil mediated killing, twitching motility as well as transformation. Mediates the attachment and the formation of bacterial microcolonies on host epithelial cells. Mechanistically, pili retractation induces host NF-kappa-B activation in infected cells, which is temporally associated with the formation of gonococcal microcolonies. The chain is Type IV major pilin protein PilE1 (pilE1) from Neisseria gonorrhoeae.